The chain runs to 490 residues: Glycogen synthase kinase-3 alpha (490 aa).

The segment covering 1–15 (MSGGGPSGGGPGGSG) has biased composition (gly residues). Residues 1 to 97 (MSGGGPSGGG…PPGVKLGRDS (97 aa)) are disordered. Ser2 carries the N-acetylserine modification. Phosphoserine is present on Ser2. Ser21 carries the post-translational modification Phosphoserine; by PKB/AKT1. Over residues 25 to 82 (PGGGGGGGGGGPGGSASGPGGTGGGKASVGAMGGGVGASSSGGGPSGSGGGGSGGPGA) the composition is skewed to gly residues. 3 positions are modified to phosphoserine: Ser72, Ser77, and Ser97. Positions 119–404 (YTDIKVIGNG…PLEACAHSFF (286 aa)) constitute a Protein kinase domain. ATP contacts are provided by residues 125 to 133 (IGNGSFGVV) and Lys148. Residue Asp244 is the Proton acceptor of the active site. Residue Tyr279 is modified to Phosphotyrosine. The interval 451–490 (GPASPLTTSYNPSSQALTEAQTGQDWQPSDATTATLASSS) is disordered. The segment covering 455–480 (PLTTSYNPSSQALTEAQTGQDWQPSD) has biased composition (polar residues). Residues 481–490 (ATTATLASSS) show a composition bias toward low complexity.

This sequence belongs to the protein kinase superfamily. CMGC Ser/Thr protein kinase family. GSK-3 subfamily. As to quaternary structure, monomer. Interacts with AXIN1 and CTNNB1/beta-catenin. Interacts with ARRB2. Interacts with CTNND2. Interacts with LMBR1L. Interacts with DDX3X. Interacts with TNFRSF10B. Phosphorylated by AKT1 at Ser-21: upon insulin-mediated signaling, the activated PKB/AKT1 protein kinase phosphorylates and deactivates GSK3A, resulting in the dephosphorylation and activation of GYS1. Activated by phosphorylation at Tyr-279.

The enzyme catalyses L-seryl-[tau protein] + ATP = O-phospho-L-seryl-[tau protein] + ADP + H(+). The catalysed reaction is L-threonyl-[tau protein] + ATP = O-phospho-L-threonyl-[tau protein] + ADP + H(+). It carries out the reaction L-seryl-[protein] + ATP = O-phospho-L-seryl-[protein] + ADP + H(+). It catalyses the reaction L-threonyl-[protein] + ATP = O-phospho-L-threonyl-[protein] + ADP + H(+). Its activity is regulated as follows. Activated by phosphorylation at Tyr-279. In response to insulin, inhibited by phosphorylation at Ser-21 by PKB/AKT1; phosphorylation at this site causes a conformational change, preventing access of substrates to the active site. Inhibited by lithium. In terms of biological role, constitutively active protein kinase that acts as a negative regulator in the hormonal control of glucose homeostasis, Wnt signaling and regulation of transcription factors and microtubules, by phosphorylating and inactivating glycogen synthase (GYS1 or GYS2), CTNNB1/beta-catenin, APC and AXIN1. Requires primed phosphorylation of the majority of its substrates. Contributes to insulin regulation of glycogen synthesis by phosphorylating and inhibiting GYS1 activity and hence glycogen synthesis. Regulates glycogen metabolism in liver, but not in muscle. May also mediate the development of insulin resistance by regulating activation of transcription factors. In Wnt signaling, regulates the level and transcriptional activity of nuclear CTNNB1/beta-catenin. Facilitates amyloid precursor protein (APP) processing and the generation of APP-derived amyloid plaques found in Alzheimer disease. May be involved in the regulation of replication in pancreatic beta-cells. Is necessary for the establishment of neuronal polarity and axon outgrowth. Through phosphorylation of the anti-apoptotic protein MCL1, may control cell apoptosis in response to growth factors deprivation. Acts as a regulator of autophagy by mediating phosphorylation of KAT5/TIP60 under starvation conditions, activating KAT5/TIP60 acetyltransferase activity and promoting acetylation of key autophagy regulators, such as ULK1 and RUBCNL/Pacer. Negatively regulates extrinsic apoptotic signaling pathway via death domain receptors. Promotes the formation of an anti-apoptotic complex, made of DDX3X, BRIC2 and GSK3B, at death receptors, including TNFRSF10B. The anti-apoptotic function is most effective with weak apoptotic signals and can be overcome by stronger stimulation. This is Glycogen synthase kinase-3 alpha (Gsk3a) from Mus musculus (Mouse).